The primary structure comprises 1316 residues: DNA-directed RNA polymerase subunit beta' (1316 aa).

Positions 60, 62, 75, and 78 each coordinate Zn(2+). 3 residues coordinate Mg(2+): Asp-535, Asp-537, and Asp-539. Zn(2+)-binding residues include Cys-891, Cys-968, Cys-975, and Cys-978.

It belongs to the RNA polymerase beta' chain family. As to quaternary structure, the RNAP catalytic core consists of 2 alpha, 1 beta, 1 beta' and 1 omega subunit. When a sigma factor is associated with the core the holoenzyme is formed, which can initiate transcription. It depends on Mg(2+) as a cofactor. Requires Zn(2+) as cofactor.

The enzyme catalyses RNA(n) + a ribonucleoside 5'-triphosphate = RNA(n+1) + diphosphate. Functionally, DNA-dependent RNA polymerase catalyzes the transcription of DNA into RNA using the four ribonucleoside triphosphates as substrates. The polypeptide is DNA-directed RNA polymerase subunit beta' (Mycobacterium bovis (strain BCG / Tokyo 172 / ATCC 35737 / TMC 1019)).